The following is a 208-amino-acid chain: Ubiquinone biosynthesis protein COQ4 homolog, mitochondrial (208 aa).

Zn(2+) is bound by residues His-105, Asp-106, His-109, and Glu-122.

It belongs to the COQ4 family. Component of a multi-subunit COQ enzyme complex. Requires Zn(2+) as cofactor.

It localises to the mitochondrion inner membrane. The catalysed reaction is a 4-hydroxy-3-methoxy-5-(all-trans-polyprenyl)benzoate + H(+) = a 2-methoxy-6-(all-trans-polyprenyl)phenol + CO2. The protein operates within cofactor biosynthesis; ubiquinone biosynthesis. Functionally, lyase that catalyzes the C1-decarboxylation of 4-hydroxy-3-methoxy-5-(all-trans-polyprenyl)benzoic acid into 2-methoxy-6-(all-trans-polyprenyl)phenol during ubiquinone biosynthesis. This Nematostella vectensis (Starlet sea anemone) protein is Ubiquinone biosynthesis protein COQ4 homolog, mitochondrial.